The chain runs to 301 residues: Acetylglutamate kinase (301 aa).

Residues Gly-68–Gly-69, Arg-90, and Asn-195 contribute to the substrate site.

It belongs to the acetylglutamate kinase family. ArgB subfamily.

It localises to the cytoplasm. The catalysed reaction is N-acetyl-L-glutamate + ATP = N-acetyl-L-glutamyl 5-phosphate + ADP. It functions in the pathway amino-acid biosynthesis; L-arginine biosynthesis; N(2)-acetyl-L-ornithine from L-glutamate: step 2/4. Catalyzes the ATP-dependent phosphorylation of N-acetyl-L-glutamate. The chain is Acetylglutamate kinase from Pseudomonas putida (strain GB-1).